The sequence spans 536 residues: MFS-type efflux pump MFS1 (536 aa).

Helical transmembrane passes span 30-50 (VTGL…LLVA), 80-100 (YLLT…FFPV), and 102-122 (WVFL…GAAP). N-linked (GlcNAc...) asparagine glycosylation occurs at Asn123. The next 3 membrane-spanning stretches (helical) occupy residues 133 to 153 (VAGI…AYSI), 163 to 183 (GAIG…GGAF), and 191 to 211 (WCFY…LIFL). N-linked (GlcNAc...) asparagine glycosylation occurs at Asn221. 8 consecutive transmembrane segments (helical) span residues 234–254 (IGTA…QWGG), 264–284 (IIAL…FQIR), 306–326 (FFLF…PIWF), 342–362 (IPMV…VTAI), 366–386 (APLY…LTTF), 400–420 (IIFG…AQAV), 426–446 (VAVG…LFVS), and 503–523 (TWYV…GMEW).

It belongs to the major facilitator superfamily. TCR/Tet family.

It is found in the cell membrane. MFS-type efflux pump involved in the modulation susceptibility to azoles, including fluconazole, itraconazole, miconazole and voriconazole. Also confers increased resistance chloramphenicol and thiamphenicol, suggesting that it acts as a pleiotropic drug transporter with a broad substrate spectrum. Finally, increases the tolerance to cycloheximide when expressed in S.cerevisiae, but not in dermatophyte species. In Arthroderma benhamiae (strain ATCC MYA-4681 / CBS 112371) (Trichophyton mentagrophytes), this protein is MFS-type efflux pump MFS1.